Here is a 599-residue protein sequence, read N- to C-terminus: MGEALNGLKRTMMCGEPREEHVGQKITLMGWVQRNRKLGGLDFIDLRDKTGIMQVVFGEEINSEAFEKAKSVRPEYCIAVTGEVVKRESVNENMPTGFVELKCESLKILSESETPPIYIKENLDAAENIRLKYRYLDLRRPDMHRIFEIRSKTTKSIRDYLEKNDFLDVETPMLTKSTPEGARDYLVPSRNYRGMFYALPQSPQIFKQLLMVSGFDKYYQIVKCFRDEDLRANRQPEFTQVDMELSFVEQDDIMALNEGLIAHVFKEVAGVDVKLPIKRMTFKDAMEKYGSDKPDLRFGMEITNITEDVKDMDFVVFKSAIEAGGSVRALCLKGGATLGRKPLDKLGEFVKTYKAKGLAWIQLKEDGVKSSIAKFLTDDVTNSIIETMGAETGDAILIVADKESVVFQSLGALRLELAKQFELIKDKNEFNFTWITEFPLFEYSEEEERYTACHHPFTAPMEEDLEFLESAPGKVRSKAYDLVLNGEELGGGSIRIHDMELQQRMFKALGFTEEQAWERFGFLLQAFKFGPPPHGGLAFGLDRMIMFLAGTENIKDVIAFPKNQNAYCYLSEAPNIADEKQLTELGIGILPKQEKQEQE.

Residue E180 coordinates L-aspartate. The aspartate stretch occupies residues Q204–K207. R226 lines the L-aspartate pocket. Residues R226–E228 and Q235 contribute to the ATP site. H454 serves as a coordination point for L-aspartate. E488 provides a ligand contact to ATP. R495 is an L-aspartate binding site. Position 540-543 (G540–R543) interacts with ATP.

This sequence belongs to the class-II aminoacyl-tRNA synthetase family. Type 1 subfamily. As to quaternary structure, homodimer.

The protein resides in the cytoplasm. The catalysed reaction is tRNA(Asp) + L-aspartate + ATP = L-aspartyl-tRNA(Asp) + AMP + diphosphate. Functionally, catalyzes the attachment of L-aspartate to tRNA(Asp) in a two-step reaction: L-aspartate is first activated by ATP to form Asp-AMP and then transferred to the acceptor end of tRNA(Asp). In Clostridium botulinum (strain Eklund 17B / Type B), this protein is Aspartate--tRNA ligase.